A 428-amino-acid chain; its full sequence is Kynureninase (428 aa).

Pyridoxal 5'-phosphate contacts are provided by residues Thr104, Thr105, 132–135 (FPSD), Asp213, His216, and Tyr238. An N6-(pyridoxal phosphate)lysine modification is found at Lys239. 2 residues coordinate pyridoxal 5'-phosphate: Trp267 and Thr295.

Belongs to the kynureninase family. Homodimer. Pyridoxal 5'-phosphate serves as cofactor.

It carries out the reaction L-kynurenine + H2O = anthranilate + L-alanine + H(+). The catalysed reaction is 3-hydroxy-L-kynurenine + H2O = 3-hydroxyanthranilate + L-alanine + H(+). Its pathway is amino-acid degradation; L-kynurenine degradation; L-alanine and anthranilate from L-kynurenine: step 1/1. It participates in cofactor biosynthesis; NAD(+) biosynthesis; quinolinate from L-kynurenine: step 2/3. In terms of biological role, catalyzes the cleavage of L-kynurenine (L-Kyn) and L-3-hydroxykynurenine (L-3OHKyn) into anthranilic acid (AA) and 3-hydroxyanthranilic acid (3-OHAA), respectively. The sequence is that of Kynureninase from Bacillus anthracis.